The chain runs to 205 residues: Ribonuclease HII (205 aa).

The RNase H type-2 domain occupies 22 to 205 (RFICGVDEAG…RKSFLKNILR (184 aa)). Residues Asp-28, Glu-29, and Asp-120 each contribute to the a divalent metal cation site.

It belongs to the RNase HII family. Requires Mn(2+) as cofactor. Mg(2+) serves as cofactor.

It is found in the cytoplasm. The enzyme catalyses Endonucleolytic cleavage to 5'-phosphomonoester.. Endonuclease that specifically degrades the RNA of RNA-DNA hybrids. The protein is Ribonuclease HII of Caldicellulosiruptor saccharolyticus (strain ATCC 43494 / DSM 8903 / Tp8T 6331).